The following is a 101-amino-acid chain: Trp operon repressor homolog (101 aa).

Residues 59–82 (QREIAQKYGVSIAQITRGSNALKA) mediate DNA binding.

It belongs to the TrpR family. Homodimer.

Its subcellular location is the cytoplasm. Its function is as follows. This protein is an aporepressor. When complexed with L-tryptophan it binds the operator region of the trp operon and prevents the initiation of transcription. The sequence is that of Trp operon repressor homolog from Chlamydia caviae (strain ATCC VR-813 / DSM 19441 / 03DC25 / GPIC) (Chlamydophila caviae).